We begin with the raw amino-acid sequence, 99 residues long: MIGNLKPLEIVLIIAVILLLFGAKKLPDMARSLGKSARILKSEAKAMKKDDAATAAPTTETVADDTVPPQSTTARTIQAAPGDVTSSRPVSEAKPTTQS.

Residues 1 to 21 (MIGNLKPLEIVLIIAVILLLF) traverse the membrane as a helical segment. The segment at 46-99 (AMKKDDAATAAPTTETVADDTVPPQSTTARTIQAAPGDVTSSRPVSEAKPTTQS) is disordered. Low complexity predominate over residues 53 to 69 (ATAAPTTETVADDTVPP). Positions 84–99 (VTSSRPVSEAKPTTQS) are enriched in polar residues.

The protein belongs to the TatA/E family. In terms of assembly, the Tat system comprises two distinct complexes: a TatABC complex, containing multiple copies of TatA, TatB and TatC subunits, and a separate TatA complex, containing only TatA subunits. Substrates initially bind to the TatABC complex, which probably triggers association of the separate TatA complex to form the active translocon.

The protein localises to the cell membrane. Its function is as follows. Part of the twin-arginine translocation (Tat) system that transports large folded proteins containing a characteristic twin-arginine motif in their signal peptide across membranes. TatA could form the protein-conducting channel of the Tat system. The chain is Sec-independent protein translocase protein TatA from Streptomyces griseus subsp. griseus (strain JCM 4626 / CBS 651.72 / NBRC 13350 / KCC S-0626 / ISP 5235).